Reading from the N-terminus, the 386-residue chain is MSELIQNVKASFEQVLGYAPSHIIQAPGRVNLIGEHTDYNDGFVLPCAINYQTVVAAAKREDNIVRVVSVDYGNAVDEFDITQAITFQQDKMWANYIRGVVKCLLARGYQFTGADISVSGNVPQGAGLSSSAALEVVIGQTFKVLFNLEISQAEIALNGQQAENEFVGCNCGIMDQMISAEGRENHAMLLDCRSLETEAVSMPEDMAVVIINSNKKRGLVDSEYNTRRQQCEEAARIFGVKALRDVTIEQFNEKVAELDEMVAKRARHVITENDRTVEAAQALRAHDMKRMGELMAESHASMRDDFEITVKEIDTLVEIVKEVIGDQGGVRMTGGGFGGCIVALVPPALVDDVKAEVEAKYQAATGLKESIYVCQAQNGAGLVEVL.

35–38 contributes to the substrate binding site; that stretch reads EHTD. Residues serine 69 and 125–131 each bind ATP; that span reads GAGLSSS. Mg(2+) is bound by residues serine 131 and glutamate 163. The Proton acceptor role is filled by aspartate 175. Tyrosine 224 contacts substrate.

It belongs to the GHMP kinase family. GalK subfamily.

It localises to the cytoplasm. The enzyme catalyses alpha-D-galactose + ATP = alpha-D-galactose 1-phosphate + ADP + H(+). It functions in the pathway carbohydrate metabolism; galactose metabolism. Its function is as follows. Catalyzes the transfer of the gamma-phosphate of ATP to D-galactose to form alpha-D-galactose-1-phosphate (Gal-1-P). In Vibrio parahaemolyticus serotype O3:K6 (strain RIMD 2210633), this protein is Galactokinase.